The following is a 439-amino-acid chain: Cobyrinate a,c-diamide synthase (439 aa).

The region spanning Lys238 to Glu431 is the GATase cobBQ-type domain. Catalysis depends on Cys320, which acts as the Nucleophile.

This sequence belongs to the CobB/CbiA family. Mg(2+) is required as a cofactor.

It catalyses the reaction cob(II)yrinate + 2 L-glutamine + 2 ATP + 2 H2O = cob(II)yrinate a,c diamide + 2 L-glutamate + 2 ADP + 2 phosphate + 2 H(+). Its pathway is cofactor biosynthesis; adenosylcobalamin biosynthesis; cob(II)yrinate a,c-diamide from sirohydrochlorin (anaerobic route): step 10/10. In terms of biological role, catalyzes the ATP-dependent amidation of the two carboxylate groups at positions a and c of cobyrinate, using either L-glutamine or ammonia as the nitrogen source. This Clostridium tetani (strain Massachusetts / E88) protein is Cobyrinate a,c-diamide synthase.